Here is a 126-residue protein sequence, read N- to C-terminus: L-alanine exporter AlaE (126 aa).

A helical membrane pass occupies residues 23–43; sequence FALVVYCFFTGMAIEILLSGM.

The protein belongs to the AlaE exporter family.

The protein localises to the cell inner membrane. Exports L-alanine. The chain is L-alanine exporter AlaE from Sodalis glossinidius (strain morsitans).